The primary structure comprises 66 residues: Metallothionein-like protein type 3 (66 aa).

This sequence belongs to the metallothionein superfamily. Type 15 family.

Metallothioneins have a high content of cysteine residues that bind various heavy metals. The polypeptide is Metallothionein-like protein type 3 (MT2) (Malus domestica (Apple)).